The primary structure comprises 180 residues: NAD(P)H-quinone oxidoreductase subunit I, chloroplastic (180 aa).

2 4Fe-4S ferredoxin-type domains span residues 55-84 (GRIHFEFDKCIACEVCVRVCPIDLPVVHWR) and 95-124 (LNYSIDFGICIFCGNCVEYCPTNCLSMTEE). Positions 64, 67, 70, 74, 104, 107, 110, and 114 each coordinate [4Fe-4S] cluster.

This sequence belongs to the complex I 23 kDa subunit family. As to quaternary structure, NDH is composed of at least 16 different subunits, 5 of which are encoded in the nucleus. [4Fe-4S] cluster is required as a cofactor.

The protein localises to the plastid. The protein resides in the chloroplast thylakoid membrane. The enzyme catalyses a plastoquinone + NADH + (n+1) H(+)(in) = a plastoquinol + NAD(+) + n H(+)(out). It carries out the reaction a plastoquinone + NADPH + (n+1) H(+)(in) = a plastoquinol + NADP(+) + n H(+)(out). NDH shuttles electrons from NAD(P)H:plastoquinone, via FMN and iron-sulfur (Fe-S) centers, to quinones in the photosynthetic chain and possibly in a chloroplast respiratory chain. The immediate electron acceptor for the enzyme in this species is believed to be plastoquinone. Couples the redox reaction to proton translocation, and thus conserves the redox energy in a proton gradient. The polypeptide is NAD(P)H-quinone oxidoreductase subunit I, chloroplastic (Calycanthus floridus var. glaucus (Eastern sweetshrub)).